The sequence spans 240 residues: Uridylate kinase (240 aa).

13 to 16 (KLSG) lines the ATP pocket. An involved in allosteric activation by GTP region spans residues 21 to 26 (GEQGYG). Position 55 (Gly-55) interacts with UMP. ATP is bound by residues Gly-56 and Arg-60. UMP contacts are provided by residues Asp-75 and 137–144 (TGNPFFST). Positions 164, 170, and 173 each coordinate ATP.

This sequence belongs to the UMP kinase family. As to quaternary structure, homohexamer.

The protein resides in the cytoplasm. It carries out the reaction UMP + ATP = UDP + ADP. It functions in the pathway pyrimidine metabolism; CTP biosynthesis via de novo pathway; UDP from UMP (UMPK route): step 1/1. With respect to regulation, allosterically activated by GTP. Inhibited by UTP. Catalyzes the reversible phosphorylation of UMP to UDP. This is Uridylate kinase from Aquifex aeolicus (strain VF5).